Consider the following 311-residue polypeptide: MAEALPEAGRYFCHSCTAEIIPRLPEYTCPRCDSGFIEELPETRNSENNSSNNSGTDQNRPSFENLESAQFTLPSGYGQVTFGIFNEGLDFPIFGTSGPVEEPRDGESRREHQSRQRYGARQPRARLSTRRAAGRNEGVPTLEGIIQQLVNGIIAPTAMSNLGVGPWGVLHSNPMDYAWGANGLDTIITQLLNQFENTGPPPADTEKIQALPTIQITEEHVGSGLECPVCKEDYTVGESVRQLPCNHLFHNDCIIPWLEQHDTCPVCRKSLSGQNTATNPPGLTEMTFSSSSTSSSSSTSPTDENNAANNS.

Positions 13, 16, 29, and 32 each coordinate Zn(2+). The C4-type zinc-finger motif lies at 13-32 (CHSCTAEIIPRLPEYTCPRC). 2 disordered regions span residues 42 to 62 (ETRN…NRPS) and 95 to 133 (GTSG…RRAA). The span at 101-114 (EEPRDGESRREHQS) shows a compositional bias: basic and acidic residues. Residues 123-133 (PRARLSTRRAA) show a composition bias toward basic residues. An RING-type zinc finger spans residues 227 to 268 (CPVCKEDYTVGESVRQLPCNHLFHNDCIIPWLEQHDTCPVCR). Residues 274–311 (QNTATNPPGLTEMTFSSSSTSSSSSTSPTDENNAANNS) form a disordered region. Residues 289-300 (SSSSTSSSSSTS) show a composition bias toward low complexity. Polar residues predominate over residues 301–311 (PTDENNAANNS).

The protein localises to the cytoplasm. It is found in the nucleus. It carries out the reaction S-ubiquitinyl-[E2 ubiquitin-conjugating enzyme]-L-cysteine + [acceptor protein]-L-lysine = [E2 ubiquitin-conjugating enzyme]-L-cysteine + N(6)-ubiquitinyl-[acceptor protein]-L-lysine.. Its pathway is protein modification; protein ubiquitination. In terms of biological role, E3 ubiquitin-protein ligase that mediates ubiquitination oF target proteins. Depending on the associated E2 ligase, mediates 'Lys-27'-, 'Lys-29'-, 'Lys-48'- and/or 'Lys-63'-linked polyubiquitination of substrates. Part of a BAG6-dependent quality control process ensuring that proteins of the secretory pathway that are mislocalized to the cytosol are degraded by the proteasome. Probably acts by providing the ubiquitin ligase activity associated with the BAG6 complex and be responsible for ubiquitination of the hydrophobic mislocalized proteins and their targeting to the proteasome. This chain is E3 ubiquitin-protein ligase RNF126, found in Xenopus tropicalis (Western clawed frog).